The sequence spans 263 residues: N-acetylgalactosamine permease IID component (263 aa).

Residues 3 to 263 (SEISKKDITR…SIVCSAFGIL (261 aa)) form the PTS EIID domain. Transmembrane regions (helical) follow at residues 61 to 81 (LEFINTHPNLVGFLMGLLISM), 98 to 118 (LFGPIAGIGDAIFWFTLLPIM), 131 to 151 (LLGPILFFAVYLLIFFLRVGW), 178 to 198 (TILGITVIGGLIASYVHINVV), 215 to 235 (FFDKVFPNILPMAYTLLMYYF), and 243 to 263 (PVLLIGVTFVLSIVCSAFGIL).

It localises to the cell inner membrane. In terms of biological role, the phosphoenolpyruvate-dependent sugar phosphotransferase system (PTS), a major carbohydrate active -transport system, catalyzes the phosphorylation of incoming sugar substrates concomitant with their translocation across the cell membrane. This system is involved in N-acetylgalactosamine transport. The polypeptide is N-acetylgalactosamine permease IID component (agaD) (Escherichia coli (strain K12)).